Here is a 25-residue protein sequence, read N- to C-terminus: Chrysophsin-2 (25 aa).

Histidine amide is present on His25.

Gill.

The protein localises to the secreted. Has antibacterial activity against Gram-positive bacteria B.subtilis ATCC 6633, L.garvieae ATCC 49156 and S.iniae F-8502, and Gram-negative bacteria E.coli WT-2, V.anguillarum ATCC 19264, V.penaeicida KHA, V.harveyi ATCC 14126, V.vulnificus ATCC 33148 and A.salmonicida NCMB 1102. Has hemolytic activity against human red blood cells. Seems to disrupt the membranes by adopting an alpha helical conformation. May play a significant role in innate host defense. This chain is Chrysophsin-2, found in Pagrus major (Red sea bream).